The primary structure comprises 249 residues: Proteasome subunit alpha (249 aa).

This sequence belongs to the peptidase T1A family. In terms of assembly, the 20S proteasome core is composed of 14 alpha and 14 beta subunits that assemble into four stacked heptameric rings, resulting in a barrel-shaped structure. The two inner rings, each composed of seven catalytic beta subunits, are sandwiched by two outer rings, each composed of seven alpha subunits. The catalytic chamber with the active sites is on the inside of the barrel. Has a gated structure, the ends of the cylinder being occluded by the N-termini of the alpha-subunits. Is capped at one or both ends by the proteasome regulatory ATPase, PAN.

Its subcellular location is the cytoplasm. The formation of the proteasomal ATPase PAN-20S proteasome complex, via the docking of the C-termini of PAN into the intersubunit pockets in the alpha-rings, triggers opening of the gate for substrate entry. Interconversion between the open-gate and close-gate conformations leads to a dynamic regulation of the 20S proteasome proteolysis activity. In terms of biological role, component of the proteasome core, a large protease complex with broad specificity involved in protein degradation. The protein is Proteasome subunit alpha of Methanosarcina barkeri (strain Fusaro / DSM 804).